A 147-amino-acid polypeptide reads, in one-letter code: Hemoglobin subunit beta-1 (147 aa).

The region spanning 3 to 147 is the Globin domain; that stretch reads EWTATERTHI…VVSALGRQYH (145 aa). 2 residues coordinate heme b: His-64 and His-93.

Belongs to the globin family. Hb 1 is a heterotetramer of two alpha-1 and two beta-1 chains. Hb 2 is a heterotetramer of two alpha-2 and two beta-1 chains. In terms of tissue distribution, red blood cells.

In terms of biological role, involved in oxygen transport from gills to the various peripheral tissues. The chain is Hemoglobin subunit beta-1 (hbb1) from Boreogadus saida (Polar cod).